Consider the following 297-residue polypeptide: 5'-3' exonuclease (297 aa).

A 5'-3' exonuclease domain is found at 171-262; the sequence is EPDQIVDFKA…MKLEKELFAI (92 aa).

Functionally, 5'-3' exonuclease acting preferentially on double-stranded DNA. The sequence is that of 5'-3' exonuclease (polA) from Mycoplasmopsis pulmonis (strain UAB CTIP) (Mycoplasma pulmonis).